We begin with the raw amino-acid sequence, 264 residues long: DNA repair protein RecO (264 aa).

Belongs to the RecO family.

Involved in DNA repair and RecF pathway recombination. This Leuconostoc citreum (strain KM20) protein is DNA repair protein RecO.